A 1061-amino-acid chain; its full sequence is Transmembrane protease serine 9 (1061 aa).

Residues 3–31 (PAAPDLQPVPEVTKGVPVPTPDSGCCRAA) are Cytoplasmic-facing. A helical transmembrane segment spans residues 32–52 (VTTVVAISVASLTLGVLSAFL). The Extracellular segment spans residues 53–1061 (SAQGVQVEHT…LGWIGQNIRE (1009 aa)). Positions 155-192 (HCPGNAFSCQNSQCVSKENPECDDRVDCSDGSDEAQCD) constitute an LDL-receptor class A domain. 4 disulfides stabilise this stretch: C156/C168, C163/C182, C176/C191, and C230/C246. Positions 205-438 (IVGGAEAAPG…LRDWILEVTS (234 aa)) constitute a Peptidase S1 1 domain. Active-site charge relay system residues include H245 and D294. Disulfide bonds link C328-C395, C360-C374, and C385-C414. The active-site Charge relay system is S389. The interval 443–499 (PVVPTEAPAPITPSTPWPTSPESRVPNTTAKPTVAPTPAPLHPSTAAKPQECGARPA) is disordered. The segment covering 452–461 (PITPSTPWPT) has biased composition (pro residues). The segment covering 462–476 (SPESRVPNTTAKPTV) has biased composition (low complexity). N-linked (GlcNAc...) asparagine glycosylation occurs at N469. Positions 506 to 738 (IVGGISAVSG…LKDWILKAMS (233 aa)) constitute a Peptidase S1 2 domain. C531 and C547 are disulfide-bonded. H546 functions as the Charge relay system in the catalytic mechanism. A glycan (N-linked (GlcNAc...) asparagine) is linked at N549. The active-site Charge relay system is D594. 3 cysteine pairs are disulfide-bonded: C628-C695, C660-C674, and C685-C714. Residues N640 and N665 are each glycosylated (N-linked (GlcNAc...) asparagine). S689 serves as the catalytic Charge relay system. Low complexity predominate over residues 740–752 (DPSSTAHPHTSST). Disordered stretches follow at residues 740–771 (DPSSTAHPHTSSTRLIPSQPPTTTAAGLIPEA) and 790–810 (LNTTLSARSTTTRRQTPAPGT). N-linked (GlcNAc...) asparagine glycosylation is present at N791. Low complexity predominate over residues 792 to 808 (TTLSARSTTTRRQTPAP). Positions 830–1060 (IVGGSAASLG…VLGWIGQNIR (231 aa)) constitute a Peptidase S1 3 domain. 4 disulfide bridges follow: C856-C872, C951-C1017, C982-C996, and C1007-C1036.

This sequence belongs to the peptidase S1 family. Proteolytically cleaved to generate 3 independent serine protease chains. The cleaved chains may remain attached to the membrane thanks to disulfide bonds. It is unclear whether cleavage always takes place.

Its subcellular location is the cell membrane. Its activity is regulated as follows. Inhibited by serine protease inhibitors PMSF and 4-(2-aminoethyl)benzenesulfonyl fluoride, but not by EDTA. Serase-1 and serase-2 are serine proteases that hydrolyze the peptides N-t-Boc-Gln-Ala-Arg-AMC and N-t-Boc-Gln-Gly-Arg-AMC. In contrast, N-t-Boc-Ala-Phe-Lys-AMC and N-t-Boc-Ala-Pro-Ala-AMC are not significantly hydrolyzed. The protein is Transmembrane protease serine 9 (Tmprss9) of Rattus norvegicus (Rat).